The chain runs to 838 residues: Semaphorin-4G (838 aa).

The first 17 residues, methionine 1 to alanine 17, serve as a signal peptide directing secretion. The Extracellular segment spans residues valine 18–leucine 675. The Sema domain occupies arginine 35 to leucine 505. N-linked (GlcNAc...) asparagine glycans are attached at residues asparagine 55, asparagine 111, and asparagine 126. Cysteine 104 and cysteine 115 form a disulfide bridge. 3 cysteine pairs are disulfide-bonded: cysteine 133–cysteine 142, cysteine 270–cysteine 377, and cysteine 294–cysteine 337. Asparagine 388 is a glycosylation site (N-linked (GlcNAc...) asparagine). The PSI domain maps to serine 507–glutamate 558. 2 disulfide bridges follow: cysteine 508/cysteine 525 and cysteine 517/cysteine 534. Asparagine 542 and asparagine 598 each carry an N-linked (GlcNAc...) asparagine glycan. The Ig-like C2-type domain maps to proline 567–threonine 649. Cysteines 584 and 632 form a disulfide. Residues leucine 676–leucine 696 traverse the membrane as a helical segment. Over tyrosine 697–valine 838 the chain is Cytoplasmic. The interval serine 723 to leucine 777 is disordered. Acidic residues predominate over residues glycine 736–glycine 745. Residues proline 763–alanine 775 are compositionally biased toward pro residues. 2 positions are modified to phosphoserine: serine 795 and serine 837.

The protein belongs to the semaphorin family. As to quaternary structure, interacts with PLXNB2.

Its subcellular location is the cell membrane. In terms of biological role, cell surface receptor for PLXNB2. May play a role in axon guidance. The protein is Semaphorin-4G (SEMA4G) of Homo sapiens (Human).